A 720-amino-acid chain; its full sequence is MTATQGKCPVMHGGATTVNISTAEWWPKALNLDILSQHDRKTNPMGPDFNYQEEVKKLDVAALKQDLQALMTDSQDWWPADWGHYGGLMIRLTWHAAGTYRIADGRGGAGTGNQRFAPLNSWPDNTNLDKARRLLWPIKQKYGNKLSWADLIAYAGTIAYESMGLKTFGFAFGREDIWHPEKDIYWGPEKEWVPPSTNPNSRYTGDRELENPLAAVTMGLIYVNPEGVDGNPDPLKTAHDVRVTFARMAMNDEETVALTAGGHTVGKCHGNGNAALLGPEPEGADVEDQGLGWINKTQSGIGRNAVTSGLEGAWTPHPTQWDNGYFRMLLNYDWELKKSPAGAWQWEPINPREEDLPVDVEDPSIRRNLVMTDADMAMKMDPEYRKISERFYQDPAYFADVFARAWFKLTHRDMGPKARYIGPDVPQEDLIWQDPIPAGNRNYDVQAVKDRIAASGLSISELVSTAWDSARTYRNSDKRGGANGARIRLAPQKDWEGNEPDRLAKVLAVLEGIAAATGASVADVIVLAGNVGVEQAARAAGVEIVLPFAPGRGDATAEQTDTESFAVLEPIHDGYRNWLKQDYAATPEELLLDRTQLLGLTAPEMTVLIGGLRVLGTNHGGTKHGVFTDREGVLTNDFFVNLTDMNYLWKPAGKNLYEICDRKTNQVKWTATRVDLVFGSNSILRAYSELYAQDDNKEKFVRDFVAAWTKVMNADRFDLD.

A cross-link (tryptophyl-tyrosyl-methioninium (Trp-Tyr) (with M-248)) is located at residues 94–222 (WHAAGTYRIA…LAAVTMGLIY (129 aa)). Residue histidine 95 is the Proton acceptor of the active site. The tryptophyl-tyrosyl-methioninium (Tyr-Met) (with W-94) cross-link spans 222–248 (YVNPEGVDGNPDPLKTAHDVRVTFARM). Position 263 (histidine 263) interacts with heme b.

It belongs to the peroxidase family. Peroxidase/catalase subfamily. As to quaternary structure, homodimer. The cofactor is heme b. In terms of processing, formation of the three residue Trp-Tyr-Met cross-link is important for the catalase, but not the peroxidase activity of the enzyme.

It catalyses the reaction H2O2 + AH2 = A + 2 H2O. The enzyme catalyses 2 H2O2 = O2 + 2 H2O. Functionally, bifunctional enzyme with both catalase and broad-spectrum peroxidase activity. The polypeptide is Catalase-peroxidase (Synechococcus elongatus (strain ATCC 33912 / PCC 7942 / FACHB-805) (Anacystis nidulans R2)).